A 439-amino-acid chain; its full sequence is ATP-dependent protease ATPase subunit HslU (439 aa).

ATP is bound by residues isoleucine 17, 59–64 (GVGKTE), aspartate 251, glutamate 317, and arginine 389.

Belongs to the ClpX chaperone family. HslU subfamily. In terms of assembly, a double ring-shaped homohexamer of HslV is capped on each side by a ring-shaped HslU homohexamer. The assembly of the HslU/HslV complex is dependent on binding of ATP.

Its subcellular location is the cytoplasm. Its function is as follows. ATPase subunit of a proteasome-like degradation complex; this subunit has chaperone activity. The binding of ATP and its subsequent hydrolysis by HslU are essential for unfolding of protein substrates subsequently hydrolyzed by HslV. HslU recognizes the N-terminal part of its protein substrates and unfolds these before they are guided to HslV for hydrolysis. This chain is ATP-dependent protease ATPase subunit HslU, found in Campylobacter jejuni subsp. jejuni serotype O:2 (strain ATCC 700819 / NCTC 11168).